The primary structure comprises 309 residues: Taste receptor type 2 member 46 (309 aa).

A topological domain (extracellular) is located at residue Met1. Residues 2–22 (ITFLPITFSILIVVIFFIGNF) traverse the membrane as a helical segment. The Cytoplasmic segment spans residues 23-46 (ANGFIALINSIEWVKRQKISFAGQ). Residues 47 to 67 (ILTALAVSRVGLLWVLSLHWY) traverse the membrane as a helical segment. The Extracellular segment spans residues 68-86 (ATEFNLAFHSVEVRSTAYN). The helical transmembrane segment at 87-107 (VWVVTNHFSNWLSTSLSMFYL) threads the bilayer. At 108–126 (LRIATFSNLIFLHLNRRVK) the chain is on the cytoplasmic side. The chain crosses the membrane as a helical span at residues 127-147 (SVILVTLLGPLLFLVCQLFVM). The Extracellular portion of the chain corresponds to 148–178 (NMNQIVRTKEYEGNMTWKIKLKSAMYLSNTT). 2 N-linked (GlcNAc...) asparagine glycosylation sites follow: Asn161 and Asn176. The chain crosses the membrane as a helical span at residues 179–199 (VAMLANFVPLTLTLISFLLLI). Residues 200 to 229 (CSLCKHLKKMRVHGKGSQDPSTKVHTKALQ) are Cytoplasmic-facing. The helical transmembrane segment at 230-250 (IVTSFLLVCAIYFLSIILSVW) threads the bilayer. Over 251–259 (NSGGLENKP) the chain is Extracellular. A helical transmembrane segment spans residues 260–280 (FFMFCQAIKFSYPSTHPFILI). Residues 281–309 (WGNKTLKQTFLSVLRNVRYWVKGQKPSSP) lie on the Cytoplasmic side of the membrane.

The protein belongs to the G-protein coupled receptor T2R family.

It is found in the membrane. The protein resides in the cell projection. The protein localises to the cilium membrane. Its function is as follows. Receptor that may play a role in the perception of bitterness and is gustducin-linked. May play a role in sensing the chemical composition of the gastrointestinal content. The activity of this receptor may stimulate alpha gustducin, mediate PLC-beta-2 activation and lead to the gating of TRPM5. In airway epithelial cells, binding of bitter compounds increases the intracellular calcium ion concentration and stimulates ciliary beat frequency. This is Taste receptor type 2 member 46 (TAS2R46) from Papio hamadryas (Hamadryas baboon).